The primary structure comprises 314 residues: Glycerate dehydrogenase (314 aa).

NAD(+) is bound by residues Thr74, 157-158 (AL), 228-230 (TAR), and Asp254. Residue Arg230 is part of the active site. Glu259 is an active-site residue. The active-site Proton donor is His280. 280-283 (HVAW) contributes to the NAD(+) binding site.

It belongs to the D-isomer specific 2-hydroxyacid dehydrogenase family. Homodimer.

The protein resides in the cytoplasm. The enzyme catalyses (R)-glycerate + NAD(+) = 3-hydroxypyruvate + NADH + H(+). It participates in one-carbon metabolism; formaldehyde assimilation via serine pathway. Functionally, plays a central role in assimilation of carbon. It converts hydroxypyruvate to glycerate as a key step in the serine cycle, and may also play an important role in C2 reactions, by interconverting glyoxylate and glycolate. This Methylorubrum extorquens (strain ATCC 14718 / DSM 1338 / JCM 2805 / NCIMB 9133 / AM1) (Methylobacterium extorquens) protein is Glycerate dehydrogenase (hprA).